A 355-amino-acid chain; its full sequence is Peptide chain release factor 1 (355 aa).

At Gln233 the chain carries N5-methylglutamine. Residues 282 to 293 (RKKEQARADSRR) show a composition bias toward basic and acidic residues. Residues 282–305 (RKKEQARADSRRGQVGSGDRSERI) are disordered.

The protein belongs to the prokaryotic/mitochondrial release factor family. Methylated by PrmC. Methylation increases the termination efficiency of RF1.

It is found in the cytoplasm. Peptide chain release factor 1 directs the termination of translation in response to the peptide chain termination codons UAG and UAA. In Rickettsia rickettsii (strain Iowa), this protein is Peptide chain release factor 1.